A 423-amino-acid chain; its full sequence is MDKIIIEGGQTRLEGEVVIEGAKNAVLPLLAASILPSKGKTILRNVPILSDVFTMNNVVRGLDIRVDFNEAANEITVDASGHILDEAPYEYVSQMRASIVVLGPILARNGHAKVSMPGGCTIGSRPINLHLKGLEAMGATITQKGGDITAQADRLQGAMIYMDFPSVGATQNLMMAATLADGVTTIENAAREPEIVDLAQFLNKMGARIRGAGTETLTITGVTHLRGVEHDVVQDRIEAGTFMVAAAMTSGNVLIRDAVWEHNRPLISKLMEMGVSVTEEEYGIRVQANTPKLKPVTVKTLPHPGFPTDMQAQFTALMAVVNGESTMVETVFENRFQHLEEMRRMGLQSEILRETAMIHGGRQLQGAPVMSTDLRASAALILTGIVAQGVTIVNNLVHLDRGYYQFHEKLAKLGATISRSSEV.

23–24 (KN) contacts phosphoenolpyruvate. Residue Arg96 coordinates UDP-N-acetyl-alpha-D-glucosamine. Cys120 serves as the catalytic Proton donor. Cys120 bears the 2-(S-cysteinyl)pyruvic acid O-phosphothioketal mark. 2 residues coordinate UDP-N-acetyl-alpha-D-glucosamine: Asp309 and Val331.

Belongs to the EPSP synthase family. MurA subfamily.

Its subcellular location is the cytoplasm. The enzyme catalyses phosphoenolpyruvate + UDP-N-acetyl-alpha-D-glucosamine = UDP-N-acetyl-3-O-(1-carboxyvinyl)-alpha-D-glucosamine + phosphate. It functions in the pathway cell wall biogenesis; peptidoglycan biosynthesis. Its function is as follows. Cell wall formation. Adds enolpyruvyl to UDP-N-acetylglucosamine. The polypeptide is UDP-N-acetylglucosamine 1-carboxyvinyltransferase 1 (Streptococcus pyogenes serotype M1).